The chain runs to 302 residues: MRLVFAGTPAVAVPSLTALAARFEVAAVITREDAPLGRKRILTPSPVAIAAEELGLSVIRANRLREEAIERVRVLRPDVGVVVAYGGLVHEPLLSLPRRGWVNLHFSLLPRWRGAAPVQHALIAGDRETGAAVFQLVPELDAGDVFGELRRLIRPDETAGELLDDLARSGARLLADTVAALADGTAVATPQSGEPVAAPKLGIADAKLDLTRPADEVYARFRGVTPEPGAWALLDGERFKIHAVRPTAAGVLPPGAVVADGKRILAGTGSRPLELVTVQPAGKRVMAAADWWRGAGGEAVLS.

107–110 provides a ligand contact to (6S)-5,6,7,8-tetrahydrofolate; that stretch reads SLLP.

It belongs to the Fmt family.

The enzyme catalyses L-methionyl-tRNA(fMet) + (6R)-10-formyltetrahydrofolate = N-formyl-L-methionyl-tRNA(fMet) + (6S)-5,6,7,8-tetrahydrofolate + H(+). Functionally, attaches a formyl group to the free amino group of methionyl-tRNA(fMet). The formyl group appears to play a dual role in the initiator identity of N-formylmethionyl-tRNA by promoting its recognition by IF2 and preventing the misappropriation of this tRNA by the elongation apparatus. This is Methionyl-tRNA formyltransferase from Leifsonia xyli subsp. xyli (strain CTCB07).